Consider the following 268-residue polypeptide: Microtubule-associated protein RP/EB family member 1 (268 aa).

Ala-2 is modified (N-acetylalanine). Residues 14–116 (NLSRHDMLAW…FVQWFKKFFD (103 aa)) form the Calponin-homology (CH) domain. N6-crotonyllysine is present on Lys-66. Tyr-124 bears the Phosphotyrosine mark. An interaction with MTUS2/TIP150 region spans residues 124–268 (YDPVAARQGQ…GGPQEEQEEY (145 aa)). The segment at 146 to 180 (LSKPKKPLGSSTAAPQRPIATQRTTAAPKAGPGMV) is disordered. Over residues 154–170 (GSSTAAPQRPIATQRTT) the composition is skewed to polar residues. The residue at position 155 (Ser-155) is a Phosphoserine. The EB1 C-terminal domain maps to 185 to 255 (GVGNGDDEAA…LYATDEGFVI (71 aa)). Residues 206–211 (TVEDLE) form an interaction with APC region. The segment at 208-268 (EDLEKERDFY…GGPQEEQEEY (61 aa)) is DCTN1-binding. At Lys-220 the chain carries N6-acetyllysine. The interval 220–242 (KLRNIELICQENEGENDPVLQRI) is APC-binding. The segment at 232 to 255 (EGENDPVLQRIVDILYATDEGFVI) is interaction with SKA1.

The protein belongs to the MAPRE family. In terms of assembly, homodimer. Heterodimer with MAPRE3. Interacts (via C-terminal residues 206-211) with APC (via C-terminal residues 2674-2845); the interaction inhibits association with and bundling of F-actin. Interacts with DCTN1, DIAPH1 and DIAPH2. Interacts with DCTN2, TERF1 and dynein intermediate chain. Interacts with CLASP2, DST, KIF2C and STIM1; probably required for their targeting to the growing microtubule plus ends. Interacts with MTUS2; interaction is direct and probably targets MTUS2 to microtubules. Interacts (via C-terminus) with SKA1 (via SXIP motif); the interaction is direct and stabilizes the kinetochore-microtubule attachment of the SKA1 complex. Interacts with APC2. Interacts with CLASP1. Interacts (via C-terminus) with CLIP1. Interacts with SLAIN2 and SLAIN1. Interacts with MACF1. Interacts with KIF18B; this interaction is required for efficient accumulation of KIF18B at microtubule plus ends. Interacts with MISP. Interacts with RABL2/RABL2A; binds preferentially to GTP-bound RABL2. Interacts with KCNAB2. Interacts with KNSTRN. Interacts with NCKAP5L. Interacts with AKAP9. Interacts with PDE4DIP isoform 2/MMG8/SMYLE; this interaction is required for its recruitment to the Golgi apparatus. May form a pericentrosomal complex with AKAP9, CDK5RAP2 and PDE4DIP isoform 2/MMG8/SMYLE; within this complex, MAPRE1 binding to CDK5RAP2 may be mediated by PDE4DIP. Contrary to other mammalian species, does not interact with CDK5RAP2, possibly due to the lack of conservation of the MAPRE1-binding motif in mouse CDK5RAP2. Interacts with AKNA. Interacts with GAS2L1, GAS2L2, and GAS2L3. Interacts with RARRES1 and AGBL2. Post-translationally, acetylation at Lys-220 by KAT2B/PCAF promotes dynamic kinetochore-microtubule interactions in early mitosis. In terms of processing, crotonylated by KAT5 during mitosis, promoting astral microtubule plasticity and dynamic connection between astral microtubules and the cortex during mitotic chromosome segregation, thereby ensuring accurate spindle positioning in mitosis. Decrotonylated by HDAC3. In terms of tissue distribution, expressed within the midpiece of sperm tail (at protein level).

The protein resides in the cytoplasm. The protein localises to the cytoskeleton. It localises to the microtubule organizing center. It is found in the centrosome. Its subcellular location is the spindle. The protein resides in the spindle pole. Functionally, plus-end tracking protein (+TIP) that binds to the plus-end of microtubules and regulates the dynamics of the microtubule cytoskeleton. Recruits other +TIP proteins to microtubules by binding to a conserved Ser-X-Leu-Pro (SXLP) motif in their polypeptide chains. Promotes cytoplasmic microtubule nucleation and elongation. Involved in mitotic spindle positioning by stabilizing microtubules and promoting dynamic connection between astral microtubules and the cortex during mitotic chromosome segregation. Assists chromosome alignment in metaphase by recruiting the SKA complex to the spindle and stabilizing its interactions with microtubule bundles (K-fibers). Also acts as a regulator of minus-end microtubule organization: interacts with the complex formed by AKAP9 and PDE4DIP, leading to recruit CAMSAP2 to the Golgi apparatus, thereby tethering non-centrosomal minus-end microtubules to the Golgi, an important step for polarized cell movement. Promotes elongation of CAMSAP2-decorated microtubule stretches on the minus-end of microtubules. Acts as a regulator of autophagosome transport via interaction with CAMSAP2. Functions downstream of Rho GTPases and DIAPH1 in stable microtubule formation. May play a role in cell migration. This chain is Microtubule-associated protein RP/EB family member 1 (Mapre1), found in Mus musculus (Mouse).